Consider the following 346-residue polypeptide: Phosphate-binding protein PstS (346 aa).

The first 25 residues, 1-25 (MKVMRTTVATVVAATLSMSAFSVFA), serve as a signal peptide directing secretion. Phosphate contacts are provided by residues 34-36 (ATF), serine 63, aspartate 81, and 164-166 (SGT).

This sequence belongs to the PstS family. In terms of assembly, the complex is composed of two ATP-binding proteins (PstB), two transmembrane proteins (PstC and PstA) and a solute-binding protein (PstS).

The protein resides in the periplasm. Functionally, part of the ABC transporter complex PstSACB involved in phosphate import. In Escherichia coli (strain K12), this protein is Phosphate-binding protein PstS (pstS).